The sequence spans 383 residues: Putative glutamate--cysteine ligase 2-1 (383 aa).

The protein belongs to the glutamate--cysteine ligase type 2 family. YbdK subfamily.

It catalyses the reaction L-cysteine + L-glutamate + ATP = gamma-L-glutamyl-L-cysteine + ADP + phosphate + H(+). Functionally, ATP-dependent carboxylate-amine ligase which exhibits weak glutamate--cysteine ligase activity. The sequence is that of Putative glutamate--cysteine ligase 2-1 from Legionella pneumophila (strain Corby).